We begin with the raw amino-acid sequence, 654 residues long: Endoplasmic reticulum chaperone BiP (654 aa).

The first 18 residues, Met1–Ala18, serve as a signal peptide directing secretion. Residues Met1 to Ala80 are required for interaction with ELAPOR1. Gly36–Tyr39 is a binding site for ATP. A Phosphoserine modification is found at Ser86. Lys96 contacts ATP. Position 125 is an N6-acetyllysine (Lys125). The nucleotide-binding (NBD) stretch occupies residues Lys125–Lys280. Residue Tyr160 is modified to 3'-nitrotyrosine. Lys213 is subject to N6-acetyllysine. Gly227–Thr229 contacts ATP. Position 271 is an N6-acetyllysine (Lys271). Residue Glu293–Ser300 participates in ATP binding. At Lys326 the chain carries N6-acetyllysine. A Glycyl lysine isopeptide (Lys-Gly) (interchain with G-Cter in SUMO2) cross-link involves residue Lys352. The residue at position 353 (Lys353) is an N6-acetyllysine; alternate. Lys353 is covalently cross-linked (Glycyl lysine isopeptide (Lys-Gly) (interchain with G-Cter in SUMO1); alternate). Gly364–Arg367 is an ATP binding site. Residues Gln409–Val419 form an interdomain linker region. The interval Cys420–Thr500 is substrate-binding (SBD). Lys447 bears the N6-succinyllysine mark. Arg492 carries the post-translational modification Omega-N-methylarginine. Thr518 carries the post-translational modification O-AMP-threonine; alternate. Residue Thr518 is modified to Phosphothreonine; alternate. An N6,N6,N6-trimethyllysine; by METTL21A; in vitro modification is found at Lys585. The residue at position 585 (Lys585) is an N6,N6-dimethyllysine; alternate. At Lys585 the chain carries N6-methyllysine; alternate. At Lys591 the chain carries N6-methyllysine. Residues Ile631 to Leu654 form a disordered region. 2 positions are modified to phosphothreonine: Thr643 and Thr648. Over residues Gly644 to Leu654 the composition is skewed to acidic residues. Ser649 carries the post-translational modification Phosphoserine. The Prevents secretion from ER signature appears at Lys651–Leu654.

Belongs to the heat shock protein 70 family. In terms of assembly, monomer and homooligomer; homooligomerization via the interdomain linker inactivates the chaperone activity and acts as a storage of HSPA5/BiP molecules. Interacts with DNAJC1 (via J domain). Component of an EIF2 complex at least composed of CELF1/CUGBP1, CALR, CALR3, EIF2S1, EIF2S2, HSP90B1 and HSPA5. Part of a large chaperone multiprotein complex comprising DNAJB11, HSP90B1, HSPA5, HYOU, PDIA2, PDIA4, PDIA6, PPIB, SDF2L1, UGGT1 and very small amounts of ERP29, but not, or at very low levels, CALR nor CANX. Interacts with TMEM132A and TRIM21. May form a complex with ERLEC1, OS9, SEL1L and SYVN1. Interacts with DNAJC10. Interacts with DNAJB9/ERdj4; leading to recruit HSPA5/BiP to ERN1/IRE1. Interacts with ERN1/IRE1 (via luminal domain); the interaction takes place following interaction with DNAJB9/ERdj4 and leads to inactivate ERN1/IRE1, the interaction also competitively inhibits ERN1 interaction with MANF. Interacts directly with MANF (via SAP domain); the interaction inhibits ATP binding to HSPA5/BiP and subsequent nucleotide exchange. Interacts with EIF2AK3/PERK (via luminal domain); interaction leads to inactivate EIF2AK3/PERK. Interacts with MX1. Interacts with METTL23. Interacts with CEMIP; the interaction induces calcium leakage from the endoplasmic reticulum and cell migration. Interacts with PCSK4 form; the interaction takes place in the endoplasmic reticulum. Interacts with CIPC. Interacts with CCDC88B (via C-terminus); the interaction opposes ERN1-mediated JNK activation, protecting against apoptosis. Interacts with INPP5K; necessary for INPP5K localization at the endoplasmic reticulum. Interacts with MANF; the interaction is direct. Interacts with LOXL2; leading to activate the ERN1/IRE1-XBP1 pathway of the unfolded protein response. Interacts with CLU under stressed condition; interaction increases CLU protein stability; facilitates its retrotranslocation and redistribution to the mitochondria; cooperatively suppress stress-induced apoptosis by stabilizing mitochondrial membrane integrity. Interacts with CCDC47. Interacts with CLN3. Interacts with ELAPOR1; may regulate the function of HSPA5 in apoptosis and cell proliferation. Interacts with CASP7. Interacts with ILDR2; the interaction stabilizes ILDR2 expression. Interacts with ADAM7. In terms of processing, in unstressed cells, AMPylation at Thr-518 by FICD inactivates the chaperome activity: AMPylated form is locked in a relatively inert state and only weakly stimulated by J domain-containing proteins. In response to endoplasmic reticulum stress, de-AMPylation by the same protein, FICD, restores the chaperone activity.

Its subcellular location is the endoplasmic reticulum lumen. It is found in the melanosome. It localises to the cytoplasm. The protein resides in the cell surface. The catalysed reaction is ATP + H2O = ADP + phosphate + H(+). Its activity is regulated as follows. The chaperone activity is regulated by ATP-induced allosteric coupling of the nucleotide-binding (NBD) and substrate-binding (SBD) domains. In the ADP-bound and nucleotide-free (apo) states, the two domains have little interaction. In contrast, in the ATP-bound state the two domains are tightly coupled, which results in drastically accelerated kinetics in both binding and release of polypeptide substrates. J domain-containing co-chaperones (DNAJB9/ERdj4 or DNAJC10/ERdj5) stimulate the ATPase activity and are required for efficient substrate recognition by HSPA5/BiP. Homooligomerization inactivates participating HSPA5/BiP protomers and probably act as reservoirs to store HSPA5/BiP molecules when they are not needed by the cell. Its function is as follows. Endoplasmic reticulum chaperone that plays a key role in protein folding and quality control in the endoplasmic reticulum lumen. Involved in the correct folding of proteins and degradation of misfolded proteins via its interaction with DNAJC10/ERdj5, probably to facilitate the release of DNAJC10/ERdj5 from its substrate. Acts as a key repressor of the EIF2AK3/PERK and ERN1/IRE1-mediated unfolded protein response (UPR). In the unstressed endoplasmic reticulum, recruited by DNAJB9/ERdj4 to the luminal region of ERN1/IRE1, leading to disrupt the dimerization of ERN1/IRE1, thereby inactivating ERN1/IRE1. Also binds and inactivates EIF2AK3/PERK in unstressed cells. Accumulation of misfolded protein in the endoplasmic reticulum causes release of HSPA5/BiP from ERN1/IRE1 and EIF2AK3/PERK, allowing their homodimerization and subsequent activation. Plays an auxiliary role in post-translational transport of small presecretory proteins across endoplasmic reticulum (ER). May function as an allosteric modulator for SEC61 channel-forming translocon complex, likely cooperating with SEC62 to enable the productive insertion of these precursors into SEC61 channel. Appears to specifically regulate translocation of precursors having inhibitory residues in their mature region that weaken channel gating. May also play a role in apoptosis and cell proliferation. This is Endoplasmic reticulum chaperone BiP from Rattus norvegicus (Rat).